Consider the following 425-residue polypeptide: UPF0229 protein YE2273 (425 aa).

Residues 84–110 form a disordered region; the sequence is TNDRIERPQGGGGGSGSGQGNAGQDGE. Residues 92-108 are compositionally biased toward gly residues; that stretch reads QGGGGGSGSGQGNAGQD.

This sequence belongs to the UPF0229 family.

The protein is UPF0229 protein YE2273 of Yersinia enterocolitica serotype O:8 / biotype 1B (strain NCTC 13174 / 8081).